Reading from the N-terminus, the 85-residue chain is Large ribosomal subunit protein bL27 (85 aa).

Residues 1 to 21 are disordered; the sequence is MAHKKAGGSTRNGRDSNAQRL. Polar residues predominate over residues 9–19; that stretch reads STRNGRDSNAQ.

The protein belongs to the bacterial ribosomal protein bL27 family.

This Pectobacterium atrosepticum (strain SCRI 1043 / ATCC BAA-672) (Erwinia carotovora subsp. atroseptica) protein is Large ribosomal subunit protein bL27.